The chain runs to 215 residues: Ependymin (215 aa).

Positions 1–20 (MHTVKLLCVVFSCLCAVAWA) are cleaved as a signal peptide. N71 and N94 each carry an N-linked (GlcNAc...) asparagine glycan.

Belongs to the ependymin family. As to quaternary structure, forms disulfide-linked dimers. Post-translationally, binds calcium through the terminal sialic acids. As to expression, EPDs are synthesized in the meninx and secreted in the cerebrospinal fluid.

The protein localises to the secreted. Its function is as follows. May play a role in neural plasticity. May be involved during axon regeneration. This is Ependymin (epd) from Cyprinus carpio (Common carp).